Consider the following 139-residue polypeptide: uncharacterized protein (139 aa).

This is an uncharacterized protein from Encephalitozoon cuniculi (strain GB-M1) (Microsporidian parasite).